The chain runs to 180 residues: Signaling threshold-regulating transmembrane adapter 1 (180 aa).

Residues 1–24 (MSRDYNCTTDDQLAWGIPSISHAW) are Extracellular-facing. The N-linked (GlcNAc...) asparagine glycan is linked to Asn6. Residues 25-45 (GLWALLGVVTVLLLISLAALL) form a helical; Signal-anchor for type III membrane protein membrane-spanning segment. Residues 46 to 180 (SQWTRGRRRN…AYANSQPAPS (135 aa)) are Cytoplasmic-facing. Phosphoserine is present on residues Ser63 and Ser66. Tyr73 is modified (phosphotyrosine). The tract at residues 73–76 (YGNL) is interaction with GRB2. The disordered stretch occupies residues 81-103 (TGRLSQEPRSEEQDPPSSGGLAR). A phosphoserine mark is found at Ser85 and Ser90. Phosphotyrosine occurs at positions 111, 132, and 153. Residues 130–135 (IKYCEV) form an interaction with PTPN11 region. An interaction with CSK region spans residues 153-156 (YASV). Residue Ser166 is modified to Phosphoserine. Residue Tyr172 is modified to Phosphotyrosine. Positions 172-175 (YANS) are interaction with GRB2.

As to quaternary structure, homodimer; disulfide-linked. When phosphorylated, interacts with PTPN11/SHP2, GRB2 and CSK. Post-translationally, phosphorylated on tyrosines upon TCR activation; which leads to the recruitment of PTPN11, GRB2 and CSK. In terms of tissue distribution, expressed in thymus and spleen, with highest levels in immature thymocytes (at protein level).

It is found in the cell membrane. Functionally, negatively regulates T-cell antigen receptor (TCR)-mediated signaling. Involved in positive selection of T-cells. The sequence is that of Signaling threshold-regulating transmembrane adapter 1 (Sit1) from Mus musculus (Mouse).